A 277-amino-acid chain; its full sequence is Probable septum site-determining protein MinC (277 aa).

Residues 107–168 form a disordered region; it reads TEGLLPGRKG…ESGPQVSHYD (62 aa). Residues 122-142 show a composition bias toward basic and acidic residues; that stretch reads GKPDGKAAEGRAPDHGTEGRA.

The protein belongs to the MinC family. As to quaternary structure, interacts with MinD and FtsZ.

Cell division inhibitor that blocks the formation of polar Z ring septums. Rapidly oscillates between the poles of the cell to destabilize FtsZ filaments that have formed before they mature into polar Z rings. Prevents FtsZ polymerization. The protein is Probable septum site-determining protein MinC of Mesorhizobium japonicum (strain LMG 29417 / CECT 9101 / MAFF 303099) (Mesorhizobium loti (strain MAFF 303099)).